The chain runs to 625 residues: MGQTANSCQKMLDGRPADVSGMVVNDPCLMNIPTSFYHSTNQELDLSNKTFKREVGGPFSVMMENKMGKPHLLETDQQNFFRDSKPINEVHSVKGERENSGESEEEEDDDDDDDDEDDEEGEEDEDEVNYKREQIIVEVNLNNQTLNVSKGDKGVAQDSSHIKTSSDDEEGDSGEDDQDSHEDEENNPLPLDGQTNMQHGNQDQKTENSDMVGGDGTIPANSTKELGKGGEAPKRKKKTPKEPKSPSDKAKSEEKETLTCDKCPRVFNTRWYLEKHMNVTHRRMQICDKCGKKFVLESELSLHLQTDCEKNIQCITCNKTFKKLWSLHEHIKIVHGYAEKKFSCEICEKKFYTMAHVRKHLVAHTKDMPFTCETCGKSFKRSMSLKVHSLQHSGEKPFRCENCDERFQYKYQLRSHMSIHIGHKQFMCQWCGKDFNMKQYFDEHMKTHTGEKPFICEICGKSFTSRPNMKRHRRTHTGEKPYPCDVCGMRFRFSNMLKAHKEKCFRVTSPVGVPPALQIALGNPTLSNPSQGVTHLPTAHVPPPSPTPPLNLNVLNTLPPRPIPHPFSHLHLHPHSHTHHLAVPPVPHLPPPPALFKSEALNHRGHNDDSFLRHLAEKTSASQHH.

The disordered stretch occupies residues 80-255 (FFRDSKPINE…PSDKAKSEEK (176 aa)). Basic and acidic residues predominate over residues 82–100 (RDSKPINEVHSVKGERENS). Positions 101–127 (GESEEEEDDDDDDDDEDDEEGEEDEDE) are enriched in acidic residues. A compositionally biased stretch (basic and acidic residues) spans 150 to 166 (KGDKGVAQDSSHIKTSS). Residues 167-186 (DDEEGDSGEDDQDSHEDEEN) are compositionally biased toward acidic residues. The span at 240 to 255 (PKEPKSPSDKAKSEEK) shows a compositional bias: basic and acidic residues. The C2H2-type 1 zinc-finger motif lies at 258–281 (LTCDKCPRVFNTRWYLEKHMNVTH). The C2H2-type 2; degenerate zinc-finger motif lies at 285–307 (QICDKCGKKFVLESELSLHLQTD). 6 consecutive C2H2-type zinc fingers follow at residues 312–335 (IQCI…KIVH), 342–364 (FSCE…LVAH), 370–392 (FTCE…SLQH), 398–420 (FRCE…MSIH), 426–448 (FMCQ…MKTH), and 454–476 (FICE…RRTH). Residues 482 to 505 (YPCDVCGMRFRFSNMLKAHKEKCF) form a C2H2-type 9; degenerate zinc finger.

The protein belongs to the krueppel C2H2-type zinc-finger protein family.

It is found in the nucleus. May be involved in transcriptional regulation. The sequence is that of Zinc finger protein 652-A (znf652-a) from Xenopus laevis (African clawed frog).